A 241-amino-acid polypeptide reads, in one-letter code: DNA repair protein RecO (241 aa).

This sequence belongs to the RecO family.

Involved in DNA repair and RecF pathway recombination. This chain is DNA repair protein RecO, found in Yersinia pseudotuberculosis serotype O:1b (strain IP 31758).